A 104-amino-acid chain; its full sequence is Flagellar hook-basal body complex protein FliE (104 aa).

The protein belongs to the FliE family.

It is found in the bacterial flagellum basal body. The chain is Flagellar hook-basal body complex protein FliE from Pectobacterium carotovorum subsp. carotovorum (strain PC1).